Reading from the N-terminus, the 121-residue chain is Large ribosomal subunit protein bL12 (121 aa).

The protein belongs to the bacterial ribosomal protein bL12 family. As to quaternary structure, homodimer. Part of the ribosomal stalk of the 50S ribosomal subunit. Forms a multimeric L10(L12)X complex, where L10 forms an elongated spine to which 2 to 4 L12 dimers bind in a sequential fashion. Binds GTP-bound translation factors.

Forms part of the ribosomal stalk which helps the ribosome interact with GTP-bound translation factors. Is thus essential for accurate translation. This is Large ribosomal subunit protein bL12 from Escherichia coli O81 (strain ED1a).